The primary structure comprises 131 residues: ATP synthase epsilon chain (131 aa).

The protein belongs to the ATPase epsilon chain family. As to quaternary structure, F-type ATPases have 2 components, CF(1) - the catalytic core - and CF(0) - the membrane proton channel. CF(1) has five subunits: alpha(3), beta(3), gamma(1), delta(1), epsilon(1). CF(0) has three main subunits: a, b and c.

The protein localises to the cell inner membrane. In terms of biological role, produces ATP from ADP in the presence of a proton gradient across the membrane. This chain is ATP synthase epsilon chain, found in Helicobacter hepaticus (strain ATCC 51449 / 3B1).